We begin with the raw amino-acid sequence, 315 residues long: tRNA pseudouridine synthase B (315 aa).

Asp54 acts as the Nucleophile in catalysis.

Belongs to the pseudouridine synthase TruB family. Type 1 subfamily.

The enzyme catalyses uridine(55) in tRNA = pseudouridine(55) in tRNA. Its function is as follows. Responsible for synthesis of pseudouridine from uracil-55 in the psi GC loop of transfer RNAs. This chain is tRNA pseudouridine synthase B, found in Cupriavidus pinatubonensis (strain JMP 134 / LMG 1197) (Cupriavidus necator (strain JMP 134)).